Reading from the N-terminus, the 766-residue chain is 5-methyltetrahydropteroyltriglutamate--homocysteine methyltransferase (766 aa).

5-methyltetrahydropteroyltri-L-glutamate-binding positions include 16 to 19 and lysine 119; that span reads RELK. Residues 440–442 and glutamate 493 contribute to the L-homocysteine site; that span reads IGS. L-methionine-binding positions include 440–442 and glutamate 493; that span reads IGS. Residues 524-525 and tryptophan 570 each bind 5-methyltetrahydropteroyltri-L-glutamate; that span reads RC. Aspartate 608 serves as a coordination point for L-homocysteine. An L-methionine-binding site is contributed by aspartate 608. Glutamate 614 contributes to the 5-methyltetrahydropteroyltri-L-glutamate binding site. Positions 650, 652, and 674 each coordinate Zn(2+). Histidine 703 (proton donor) is an active-site residue. A Zn(2+)-binding site is contributed by cysteine 735.

This sequence belongs to the vitamin-B12 independent methionine synthase family. The cofactor is Zn(2+).

The catalysed reaction is 5-methyltetrahydropteroyltri-L-glutamate + L-homocysteine = tetrahydropteroyltri-L-glutamate + L-methionine. It participates in amino-acid biosynthesis; L-methionine biosynthesis via de novo pathway; L-methionine from L-homocysteine (MetE route): step 1/1. Functionally, catalyzes the transfer of a methyl group from 5-methyltetrahydrofolate to homocysteine resulting in methionine formation. This Pseudomonas aeruginosa (strain UCBPP-PA14) protein is 5-methyltetrahydropteroyltriglutamate--homocysteine methyltransferase.